Reading from the N-terminus, the 122-residue chain is uncharacterized protein (122 aa).

The protein localises to the plastid. This is an uncharacterized protein from Euglena longa (Euglenophycean alga).